The chain runs to 152 residues: Transcriptional regulator MraZ (152 aa).

SpoVT-AbrB domains follow at residues 5–52 (HSNR…PMPE) and 81–124 (ATEV…DQGR).

The protein belongs to the MraZ family. As to quaternary structure, forms oligomers.

It is found in the cytoplasm. Its subcellular location is the nucleoid. The chain is Transcriptional regulator MraZ from Solidesulfovibrio magneticus (strain ATCC 700980 / DSM 13731 / RS-1) (Desulfovibrio magneticus).